A 111-amino-acid polypeptide reads, in one-letter code: Large ribosomal subunit protein uL22 (111 aa).

Belongs to the universal ribosomal protein uL22 family. Part of the 50S ribosomal subunit.

Functionally, this protein binds specifically to 23S rRNA; its binding is stimulated by other ribosomal proteins, e.g. L4, L17, and L20. It is important during the early stages of 50S assembly. It makes multiple contacts with different domains of the 23S rRNA in the assembled 50S subunit and ribosome. Its function is as follows. The globular domain of the protein is located near the polypeptide exit tunnel on the outside of the subunit, while an extended beta-hairpin is found that lines the wall of the exit tunnel in the center of the 70S ribosome. The polypeptide is Large ribosomal subunit protein uL22 (Acholeplasma laidlawii (strain PG-8A)).